Here is a 340-residue protein sequence, read N- to C-terminus: Methane monooxygenase component C (340 aa).

A 2Fe-2S ferredoxin-type domain is found at 1-92 (MYQIVIETED…DLHLLVPYTY (92 aa)). The [2Fe-2S] cluster site is built by Cys-37, Cys-41, Cys-44, and Cys-76. In terms of domain architecture, FAD-binding FR-type spans 101 to 205 (QTNWLAEILA…RGPAGSFFLH (105 aa)). 215-229 (VAGGTGLSPVLSMIR) is an FAD binding site.

As to quaternary structure, the soluble methane monooxygenase (sMMO) consists of four components A/MMOH (composed of alpha/MmoX, beta/MmoY and gamma/MmoZ), B/MMOB (MmoB), C/MMOR (MmoC) and D/MMOD (MmoD). Requires [2Fe-2S] cluster as cofactor.

It carries out the reaction methane + NADH + O2 + H(+) = methanol + NAD(+) + H2O. The enzyme catalyses methane + NADPH + O2 + H(+) = methanol + NADP(+) + H2O. Functionally, responsible for the initial oxygenation of methane to methanol in methanotrophs. It also catalyzes the monohydroxylation of a variety of unactivated alkenes, alicyclic, aromatic and heterocyclic compounds. The component C is the iron-sulfur flavoprotein of sMMO. The protein is Methane monooxygenase component C (mmoC) of Methylosinus trichosporium.